Reading from the N-terminus, the 481-residue chain is Zinc metalloproteinase/disintegrin (481 aa).

The first 20 residues, 1 to 20, serve as a signal peptide directing secretion; it reads MIQVLLVTICLAVFPYQGSS. The propeptide occupies 21-190; the sequence is IILESGNVDD…KASQLYLTPE (170 aa). The 196-residue stretch at 197 to 392 folds into the Peptidase M12B domain; it reads RHIELAIVVD…KKPQCILNAP (196 aa). Ca(2+) is bound by residues glutamate 200 and aspartate 284. Cystine bridges form between cysteine 308/cysteine 387, cysteine 349/cysteine 371, and cysteine 351/cysteine 354. Histidine 333 is a Zn(2+) binding site. The active site involves glutamate 334. Histidine 337 and histidine 343 together coordinate Zn(2+). The Ca(2+) site is built by cysteine 387 and asparagine 390. Residues 393–410 constitute a propeptide that is removed on maturation; sequence LRTDTVSTPISGNEFLEA. In terms of domain architecture, Disintegrin spans 400–481; that stretch reads TPISGNEFLE…ADCPRNGLYG (82 aa). 6 disulfide bridges follow: cysteine 414–cysteine 429, cysteine 416–cysteine 424, cysteine 423–cysteine 446, cysteine 437–cysteine 443, cysteine 442–cysteine 467, and cysteine 455–cysteine 474. Residues 459-461 carry the Cell attachment site motif; sequence RGD.

It belongs to the venom metalloproteinase (M12B) family. P-II subfamily. P-IIa sub-subfamily. As to quaternary structure, monomer. Requires Zn(2+) as cofactor. Expressed by the venom gland.

The protein localises to the secreted. In terms of biological role, impairs hemostasis in the envenomed animal. Functionally, inhibits platelet aggregation induced by ADP and collagen. Acts by inhibiting fibrinogen interaction with platelet receptors GPIIb/GPIIIa (ITGA2B/ITGB3). Has antitumor-growth activity. The protein is Zinc metalloproteinase/disintegrin of Protobothrops jerdonii (Jerdon's pitviper).